A 384-amino-acid polypeptide reads, in one-letter code: DNA dC-&gt;dU-editing enzyme APOBEC-3G (384 aa).

An essential for cytoplasmic localization region spans residues 1–60 (MKPHFRNPVERMYQDTFSDNFYNRPILSRRNTVWLCYEVKTKGPSRPPLDAKIFRGQVYS). CMP/dCMP-type deaminase domains lie at 29–138 (RRNT…LRSL) and 214–328 (GRHE…LRTL). Position 32 is a phosphothreonine; by PKA (Thr-32). Residues His-65, Cys-97, and Cys-100 each contribute to the Zn(2+) site. Residues 209 to 336 (ELWVRGRHET…TLAKAGAEIS (128 aa)) are necessary for homooligomerization. The interval 213-215 (RGR) is interaction with DNA. Thr-218 carries the post-translational modification Phosphothreonine; by PKA and CAMK2. His-257 serves as a coordination point for Zn(2+). The Proton donor role is filled by Glu-259. Zn(2+)-binding residues include Cys-288 and Cys-291. Residues 313–320 (RIYDDQGR) form an interaction with DNA region.

Belongs to the cytidine and deoxycytidylate deaminase family. As to quaternary structure, homodimer. Homooligomer. Can bind RNA to form ribonucleoprotein complexes of high-molecular-mass (HMM) or low-molecular-mass (LMM). HMM is inactive and heterogeneous in protein composition because of binding nonselectively to cellular RNAs, which in turn are associated with variety of cellular proteins. The LMM form which is enzymatically active has few or no RNAs associated. Its ability to form homooligomer is distinct from its ability to assemble into HMM. Interacts with APOBEC3B, APOBEC3F, MOV10, AGO2, EIF4E, EIF4ENIF1, DCP2 and DDX6 in an RNA-dependent manner. Interacts with AGO1, AGO3 and PKA/PRKACA. Requires Zn(2+) as cofactor.

It is found in the cytoplasm. The protein resides in the nucleus. The protein localises to the P-body. The enzyme catalyses a 2'-deoxycytidine in single-stranded DNA + H2O + H(+) = a 2'-deoxyuridine in single-stranded DNA + NH4(+). Functionally, DNA deaminase (cytidine deaminase) which acts as an inhibitor of retrovirus replication and retrotransposon mobility via deaminase-dependent and -independent mechanisms. After the penetration of retroviral nucleocapsids into target cells of infection and the initiation of reverse transcription, it can induce the conversion of cytosine to uracil in the minus-sense single-strand viral DNA, leading to G-to-A hypermutations in the subsequent plus-strand viral DNA. The resultant detrimental levels of mutations in the proviral genome, along with a deamination-independent mechanism that works prior to the proviral integration, together exert efficient antiretroviral effects in infected target cells. Selectively targets single-stranded DNA and does not deaminate double-stranded DNA or single- or double-stranded RNA. May inhibit the mobility of LTR retrotransposons. The polypeptide is DNA dC-&gt;dU-editing enzyme APOBEC-3G (APOBEC3G) (Pan paniscus (Pygmy chimpanzee)).